The following is a 252-amino-acid chain: Indole-3-glycerol phosphate synthase (252 aa).

Belongs to the TrpC family.

It catalyses the reaction 1-(2-carboxyphenylamino)-1-deoxy-D-ribulose 5-phosphate + H(+) = (1S,2R)-1-C-(indol-3-yl)glycerol 3-phosphate + CO2 + H2O. Its pathway is amino-acid biosynthesis; L-tryptophan biosynthesis; L-tryptophan from chorismate: step 4/5. This Bacillus licheniformis (strain ATCC 14580 / DSM 13 / JCM 2505 / CCUG 7422 / NBRC 12200 / NCIMB 9375 / NCTC 10341 / NRRL NRS-1264 / Gibson 46) protein is Indole-3-glycerol phosphate synthase.